The chain runs to 877 residues: DNA polymerase I (877 aa).

The 94-residue stretch at 177–270 folds into the 5'-3' exonuclease domain; it reads TPAQFIDLKA…LEDLVYSGPD (94 aa). A 3'-5' exonuclease domain is found at 302–465; it reads DFTIVDQISQ…TEPILLEKLS (164 aa).

This sequence belongs to the DNA polymerase type-A family. Single-chain monomer with multiple functions.

The catalysed reaction is DNA(n) + a 2'-deoxyribonucleoside 5'-triphosphate = DNA(n+1) + diphosphate. Its function is as follows. In addition to polymerase activity, this DNA polymerase exhibits 3'-5' and 5'-3' exonuclease activity. The sequence is that of DNA polymerase I (polA) from Streptococcus pneumoniae serotype 4 (strain ATCC BAA-334 / TIGR4).